A 335-amino-acid chain; its full sequence is Ornithine carbamoyltransferase (335 aa).

Residues 57 to 60 (STRT), Arg-108, and 135 to 138 (HPTQ) each bind carbamoyl phosphate. Residues Asn-168, Asp-232, and 236–237 (SM) contribute to the L-ornithine site. Residues 274-275 (CL) and Arg-319 contribute to the carbamoyl phosphate site.

This sequence belongs to the aspartate/ornithine carbamoyltransferase superfamily. OTCase family.

The protein localises to the cytoplasm. The enzyme catalyses carbamoyl phosphate + L-ornithine = L-citrulline + phosphate + H(+). It participates in amino-acid degradation; L-arginine degradation via ADI pathway; carbamoyl phosphate from L-arginine: step 2/2. Reversibly catalyzes the transfer of the carbamoyl group from carbamoyl phosphate (CP) to the N(epsilon) atom of ornithine (ORN) to produce L-citrulline. This chain is Ornithine carbamoyltransferase, found in Limosilactobacillus reuteri (strain DSM 20016) (Lactobacillus reuteri).